The sequence spans 332 residues: Malate dehydrogenase 1, cytoplasmic (332 aa).

NAD(+) is bound by residues 16-17 and aspartate 43; that span reads QI. Methionine 56 bears the Methionine sulfoxide mark. Glycine 90 provides a ligand contact to NAD(+). Methionine 97 carries the post-translational modification Methionine sulfoxide. Arginine 99 provides a ligand contact to oxaloacetate. Glutamine 113 provides a ligand contact to NAD(+). Residue lysine 119 forms a Glycyl lysine isopeptide (Lys-Gly) (interchain with G-Cter in ubiquitin) linkage. Asparagine 132 lines the NAD(+) pocket. Residues asparagine 132, arginine 163, histidine 188, and serine 243 each coordinate oxaloacetate. Histidine 188 functions as the Proton acceptor in the catalytic mechanism.

The protein belongs to the LDH/MDH superfamily. MDH type 2 family. Forms a homodimer. Forms a disulfide-linked homodimer upon oxidation. Interacts with 14-3-3-like proteins GRF1 GRF3 and GRF8. Interacts with TRX1, TRX2, TRX3, TRX4 and TRX5. Expressed in rosette leaves.

Its subcellular location is the cytoplasm. The enzyme catalyses (S)-malate + NAD(+) = oxaloacetate + NADH + H(+). Decreased activity upon treatment with hydrogen peroxide. Its function is as follows. Catalyzes a reversible NAD-dependent dehydrogenase reaction involved in central metabolism and redox homeostasis between organellar compartments. The polypeptide is Malate dehydrogenase 1, cytoplasmic (MDH1) (Arabidopsis thaliana (Mouse-ear cress)).